The sequence spans 334 residues: MTAKVGINGFGRIGRIVFRNSFSHENTEVVMVNDPFIEVQYAAYMLKYDSTHGNFEYDVHIDGDSIVVNGKKVKFYAEKDPAKIPWKDAGAEYIIESTGVFTTVEKASAHLQGGAKKVIISAPSADAPMYVMGVNEKTYAGADVVSNASCTTNCLAPLTKVLHERFGVVEGLMTAVHAYTATQKLVDAPSKKDWRGGRAAAQNLIPSSTGAAKAVGKVIPELQGKVTGMSIRVPTSNVSVVDLTCRLEKGASYEEIITAIKEAAQGELKGILDYTEDDVVSSDMKGNPHSSIVDIKAGISLNPNFLKIVSWYDNEWGYSRRVLDLTAYIASVGK.

NAD(+) contacts are provided by residues 12–13 (RI), D34, and S121. D-glyceraldehyde 3-phosphate-binding positions include 149–151 (SCT), T180, 209–210 (TG), and R232. C150 functions as the Nucleophile in the catalytic mechanism. Residue N314 participates in NAD(+) binding.

This sequence belongs to the glyceraldehyde-3-phosphate dehydrogenase family. Homotetramer.

It carries out the reaction D-glyceraldehyde 3-phosphate + phosphate + NAD(+) = (2R)-3-phospho-glyceroyl phosphate + NADH + H(+). Its pathway is carbohydrate degradation; glycolysis; pyruvate from D-glyceraldehyde 3-phosphate: step 1/5. In terms of biological role, glyceraldehyde-3-phosphate dehydrogenase; part of the gene cluster that mediates the biosynthesis of heptelidic acid (HA), a sesquiterpene lactone that acts as an inhibitor of glyceraldehyde-3-phosphatedehydrogenase (GAPDH) and a growth inhibitor of the salt-tolerant lactic acid bacteria in soy sauce brewing. The GAPDPH hepG/gdpB shows much higher resistance to HA than the GAPDH gpdA located outside of the cluster, but it does not seem to act in self-resistance. The chain is Glyceraldehyde-3-phosphate dehydrogenase B from Aspergillus oryzae (strain ATCC 42149 / RIB 40) (Yellow koji mold).